Reading from the N-terminus, the 344-residue chain is Galactinol synthase 1 (344 aa).

The active site involves Lys-111. The Mn(2+) site is built by Asp-127, Asp-129, and His-265.

Belongs to the glycosyltransferase 8 family. Galactosyltransferase subfamily. Requires a divalent metal cation as cofactor. As to expression, accumulates in mature seeds. Expressed in seedlings (axes and cotyledons), meristems, vascular tissues and emerging lateral roots. Present in abscission zones.

Its subcellular location is the cytoplasm. It catalyses the reaction myo-inositol + UDP-alpha-D-galactose = alpha-D-galactosyl-(1-&gt;3)-1D-myo-inositol + UDP + H(+). Galactinol synthase involved in the biosynthesis of raffinose family oligosaccharides (RFOs) that function as osmoprotectants. Promotes plant stress tolerance such as heat, chilling, salinity and methylviologen (MV), a superoxide radical generating drug, by mediating raffinose accumulation, an osmoprotective substance. This is Galactinol synthase 1 (GOLS1) from Arabidopsis thaliana (Mouse-ear cress).